The following is a 43-amino-acid chain: Protein PsbN (43 aa).

Residues 5-27 (TIFSIFFSCLLIGLTGYSLYTSF) form a helical membrane-spanning segment.

This sequence belongs to the PsbN family.

Its subcellular location is the plastid. It localises to the chloroplast thylakoid membrane. In terms of biological role, may play a role in photosystem I and II biogenesis. The protein is Protein PsbN of Mesostigma viride (Green alga).